The chain runs to 171 residues: PIDD1 alternative open reading frame protein (171 aa).

Disordered regions lie at residues 1–22 (MSGLQGPSVGDGCNGGGARAGG) and 76–156 (ILAS…LCPA). Residues 84–99 (GPSAAGGHPGPAASEP) show a composition bias toward low complexity.

Interacts with calpain-2 catalytic subunit CAPN2. Cleaved in vitro following UV irradiation to induce caspase-mediated apoptosis and this cleavage is inhibited by a broad-spectrum caspase inhibitor.

The protein resides in the cytoplasm. It localises to the cytoskeleton. This chain is PIDD1 alternative open reading frame protein, found in Homo sapiens (Human).